A 450-amino-acid chain; its full sequence is NADH-quinone oxidoreductase subunit H (450 aa).

Helical transmembrane passes span 18–38 (WWLV…TPLL), 91–111 (ILAP…IPFG), 128–148 (LPVA…GIVL), 169–189 (VISY…DAGT), 201–221 (HTWY…SMVG), 262–282 (VTVS…PFPL), 292–312 (WWPV…FVWL), 324–344 (FMGL…MIVA), and 358–378 (SIAL…LLWK). The segment at 387 to 450 (APEKPVEPRG…TGPTQENSDD (64 aa)) is disordered. A compositionally biased stretch (basic and acidic residues) spans 390–400 (KPVEPRGRAEL). Residues 433–450 (VSVTGAHSTGPTQENSDD) show a composition bias toward polar residues.

It belongs to the complex I subunit 1 family. As to quaternary structure, NDH-1 is composed of 14 different subunits. Subunits NuoA, H, J, K, L, M, N constitute the membrane sector of the complex.

It is found in the cell membrane. It carries out the reaction a quinone + NADH + 5 H(+)(in) = a quinol + NAD(+) + 4 H(+)(out). Its function is as follows. NDH-1 shuttles electrons from NADH, via FMN and iron-sulfur (Fe-S) centers, to quinones in the respiratory chain. The immediate electron acceptor for the enzyme in this species is believed to be ubiquinone. Couples the redox reaction to proton translocation (for every two electrons transferred, four hydrogen ions are translocated across the cytoplasmic membrane), and thus conserves the redox energy in a proton gradient. This subunit may bind ubiquinone. The protein is NADH-quinone oxidoreductase subunit H of Rhodococcus jostii (strain RHA1).